The primary structure comprises 158 residues: SsrA-binding protein (158 aa).

It belongs to the SmpB family.

The protein localises to the cytoplasm. Functionally, required for rescue of stalled ribosomes mediated by trans-translation. Binds to transfer-messenger RNA (tmRNA), required for stable association of tmRNA with ribosomes. tmRNA and SmpB together mimic tRNA shape, replacing the anticodon stem-loop with SmpB. tmRNA is encoded by the ssrA gene; the 2 termini fold to resemble tRNA(Ala) and it encodes a 'tag peptide', a short internal open reading frame. During trans-translation Ala-aminoacylated tmRNA acts like a tRNA, entering the A-site of stalled ribosomes, displacing the stalled mRNA. The ribosome then switches to translate the ORF on the tmRNA; the nascent peptide is terminated with the 'tag peptide' encoded by the tmRNA and targeted for degradation. The ribosome is freed to recommence translation, which seems to be the essential function of trans-translation. The sequence is that of SsrA-binding protein from Psychrobacter sp. (strain PRwf-1).